Here is a 254-residue protein sequence, read N- to C-terminus: Leucyl/phenylalanyl-tRNA--protein transferase (254 aa).

This sequence belongs to the L/F-transferase family.

Its subcellular location is the cytoplasm. It carries out the reaction N-terminal L-lysyl-[protein] + L-leucyl-tRNA(Leu) = N-terminal L-leucyl-L-lysyl-[protein] + tRNA(Leu) + H(+). The enzyme catalyses N-terminal L-arginyl-[protein] + L-leucyl-tRNA(Leu) = N-terminal L-leucyl-L-arginyl-[protein] + tRNA(Leu) + H(+). The catalysed reaction is L-phenylalanyl-tRNA(Phe) + an N-terminal L-alpha-aminoacyl-[protein] = an N-terminal L-phenylalanyl-L-alpha-aminoacyl-[protein] + tRNA(Phe). Functions in the N-end rule pathway of protein degradation where it conjugates Leu, Phe and, less efficiently, Met from aminoacyl-tRNAs to the N-termini of proteins containing an N-terminal arginine or lysine. The chain is Leucyl/phenylalanyl-tRNA--protein transferase from Burkholderia vietnamiensis (strain G4 / LMG 22486) (Burkholderia cepacia (strain R1808)).